The primary structure comprises 307 residues: Glycerol-3-phosphate dehydrogenase [NAD(P)+] (307 aa).

Residues phenylalanine 11, arginine 31, and lysine 95 each contribute to the NADPH site. 3 residues coordinate sn-glycerol 3-phosphate: lysine 95, glycine 121, and serine 123. Residue alanine 125 coordinates NADPH. Sn-glycerol 3-phosphate is bound by residues lysine 176, aspartate 229, serine 239, arginine 240, and asparagine 241. Catalysis depends on lysine 176, which acts as the Proton acceptor. Arginine 240 lines the NADPH pocket. An NADPH-binding site is contributed by glutamate 261.

The protein belongs to the NAD-dependent glycerol-3-phosphate dehydrogenase family.

The protein resides in the cytoplasm. The catalysed reaction is sn-glycerol 3-phosphate + NAD(+) = dihydroxyacetone phosphate + NADH + H(+). It catalyses the reaction sn-glycerol 3-phosphate + NADP(+) = dihydroxyacetone phosphate + NADPH + H(+). It participates in membrane lipid metabolism; glycerophospholipid metabolism. Catalyzes the reduction of the glycolytic intermediate dihydroxyacetone phosphate (DHAP) to sn-glycerol 3-phosphate (G3P), the key precursor for phospholipid synthesis. The chain is Glycerol-3-phosphate dehydrogenase [NAD(P)+] from Jannaschia sp. (strain CCS1).